We begin with the raw amino-acid sequence, 82 residues long: Probable acyl carrier protein IacP (82 aa).

The Carrier domain maps to 3–78 (MDIEARVKKV…DICRVVKKSL (76 aa)). S38 carries the O-(pantetheine 4'-phosphoryl)serine modification.

In terms of processing, 4'-phosphopantetheine is transferred from CoA to a specific serine of apo-IacP.

The protein localises to the cytoplasm. Functionally, acyl carrier protein. This is Probable acyl carrier protein IacP (iacP) from Salmonella typhimurium (strain SL1344).